The following is a 373-amino-acid chain: Zinc finger protein CONSTANS (373 aa).

A B box-type 1; atypical zinc finger spans residues 15–57 (NRARPCDTCRSNACTVYCHADSAYLCMSCDAQVHSANRVASRH). Residues Cys20, Cys23, Cys43, His48, Cys63, Cys66, Cys86, and His91 each coordinate Zn(2+). The segment at 58 to 108 (KRVRVCESCERAPAAFLCEADDASLCTACDSEVHSANPLARRHQRVPILPI) adopts a B box-type 2; atypical zinc-finger fold. Positions 109 to 120 (SGNSFSSMTTTH) are enriched in polar residues. Residues 109 to 130 (SGNSFSSMTTTHHQSEKTMTDP) form a disordered region. The segment covering 121–130 (HQSEKTMTDP) has biased composition (basic and acidic residues). The CCT domain maps to 306 to 348 (REARVLRYREKRKTRKFEKTIRYASRKAYAEIRPRVNGRFAKR).

Belongs to the CONSTANS family. As to quaternary structure, interacts with ADO3, SPA1, SPA2, SPA3 and SPA4. Interacts with MRG1 and MRG2 (via MRG domain). Interacts (via B-box) with MIP1A. Interacts with AS1 to form a functional complex regulating FT expression. Interacts with NFYC9. Component of a red light-dependent nuclear complex made of PHL, PHYB and CO. Interacts directly with PHL in the presence of PHYB. As to expression, expressed in leaves, shoots and shoot apical meristem. Detected in the vascular tissue of the hypocotyl, the cotyledons and the leaves. Restricted to the protoxylem and phloem in young inflorescence stems and to the phloem only in older inflorescences. Also detected in the vascular tissue of the root.

Its subcellular location is the nucleus. Functionally, transcription factor that acts in the long day flowering pathway and may mediate between the circadian clock and the control of flowering. Plays a role in the regulation of flowering time by acting on 'SUPPRESSOR OF OVEREXPRESSION OF CO1', 'TERMINAL FLOWER 1' and 'FLOWERING LOCUS T'. Also regulates P5CS2 and ACS10 (involved in proline and ethylene biosynthesis, respectively). Regulates the expression of NAKR1 by binding to the 5'-TGTG(N2-3)ATG-3' motif. In Arabidopsis thaliana (Mouse-ear cress), this protein is Zinc finger protein CONSTANS.